Consider the following 90-residue polypeptide: Small ribosomal subunit protein uS19 (90 aa).

The protein belongs to the universal ribosomal protein uS19 family.

Its function is as follows. Protein S19 forms a complex with S13 that binds strongly to the 16S ribosomal RNA. This Rhizorhabdus wittichii (strain DSM 6014 / CCUG 31198 / JCM 15750 / NBRC 105917 / EY 4224 / RW1) (Sphingomonas wittichii) protein is Small ribosomal subunit protein uS19.